Here is a 314-residue protein sequence, read N- to C-terminus: Methionyl-tRNA formyltransferase (314 aa).

111–114 (SLLP) contributes to the (6S)-5,6,7,8-tetrahydrofolate binding site.

This sequence belongs to the Fmt family.

The enzyme catalyses L-methionyl-tRNA(fMet) + (6R)-10-formyltetrahydrofolate = N-formyl-L-methionyl-tRNA(fMet) + (6S)-5,6,7,8-tetrahydrofolate + H(+). Functionally, attaches a formyl group to the free amino group of methionyl-tRNA(fMet). The formyl group appears to play a dual role in the initiator identity of N-formylmethionyl-tRNA by promoting its recognition by IF2 and preventing the misappropriation of this tRNA by the elongation apparatus. In Coxiella burnetii (strain CbuK_Q154) (Coxiella burnetii (strain Q154)), this protein is Methionyl-tRNA formyltransferase.